Consider the following 309-residue polypeptide: Ribosomal RNA small subunit methyltransferase H (309 aa).

S-adenosyl-L-methionine contacts are provided by residues 36-38, D56, F82, D103, and Q110; that span reads GGH.

This sequence belongs to the methyltransferase superfamily. RsmH family.

It is found in the cytoplasm. It carries out the reaction cytidine(1402) in 16S rRNA + S-adenosyl-L-methionine = N(4)-methylcytidine(1402) in 16S rRNA + S-adenosyl-L-homocysteine + H(+). Its function is as follows. Specifically methylates the N4 position of cytidine in position 1402 (C1402) of 16S rRNA. The protein is Ribosomal RNA small subunit methyltransferase H of Hahella chejuensis (strain KCTC 2396).